A 776-amino-acid chain; its full sequence is Venom dipeptidyl peptidase 4 (776 aa).

The signal sequence occupies residues 1–19 (MVPLRSFVLLNGLFFVLLA). 3 N-linked (GlcNAc...) asparagine glycosylation sites follow: asparagine 44, asparagine 66, and asparagine 329. Intrachain disulfides connect cysteine 449–cysteine 452 and cysteine 462–cysteine 480. N-linked (GlcNAc...) asparagine glycosylation is found at asparagine 504 and asparagine 577. The active-site Charge relay system is the serine 638. An intrachain disulfide couples cysteine 658 to cysteine 769. An N-linked (GlcNAc...) asparagine glycan is attached at asparagine 693. Catalysis depends on charge relay system residues aspartate 717 and histidine 749.

The protein belongs to the peptidase S9B family. DPPIV subfamily. In terms of tissue distribution, expressed by the venom gland.

Its subcellular location is the secreted. The enzyme catalyses Release of an N-terminal dipeptide, Xaa-Yaa-|-Zaa-, from a polypeptide, preferentially when Yaa is Pro, provided Zaa is neither Pro nor hydroxyproline.. Venom dipeptidyl-peptidase which removes N-terminal dipeptides sequentially from polypeptides having unsubstituted N-termini provided that the penultimate residue is proline. May process venom proteins into their active forms and/or modulate the chemotactic activity of immune cells after the insect sting. The protein is Venom dipeptidyl peptidase 4 of Vespa velutina (Asian yellow-legged hornet).